The following is a 448-amino-acid chain: Methylenetetrahydrofolate--tRNA-(uracil-5-)-methyltransferase TrmFO (448 aa).

13–18 (GAGLAG) is an FAD binding site.

The protein belongs to the MnmG family. TrmFO subfamily. The cofactor is FAD.

It is found in the cytoplasm. It catalyses the reaction uridine(54) in tRNA + (6R)-5,10-methylene-5,6,7,8-tetrahydrofolate + NADH + H(+) = 5-methyluridine(54) in tRNA + (6S)-5,6,7,8-tetrahydrofolate + NAD(+). The enzyme catalyses uridine(54) in tRNA + (6R)-5,10-methylene-5,6,7,8-tetrahydrofolate + NADPH + H(+) = 5-methyluridine(54) in tRNA + (6S)-5,6,7,8-tetrahydrofolate + NADP(+). Functionally, catalyzes the folate-dependent formation of 5-methyl-uridine at position 54 (M-5-U54) in all tRNAs. This chain is Methylenetetrahydrofolate--tRNA-(uracil-5-)-methyltransferase TrmFO, found in Streptococcus pyogenes serotype M6 (strain ATCC BAA-946 / MGAS10394).